The sequence spans 367 residues: Anhydro-N-acetylmuramic acid kinase (367 aa).

11–18 provides a ligand contact to ATP; that stretch reads GTSLDGVD.

The protein belongs to the anhydro-N-acetylmuramic acid kinase family.

It carries out the reaction 1,6-anhydro-N-acetyl-beta-muramate + ATP + H2O = N-acetyl-D-muramate 6-phosphate + ADP + H(+). It participates in amino-sugar metabolism; 1,6-anhydro-N-acetylmuramate degradation. Its pathway is cell wall biogenesis; peptidoglycan recycling. In terms of biological role, catalyzes the specific phosphorylation of 1,6-anhydro-N-acetylmuramic acid (anhMurNAc) with the simultaneous cleavage of the 1,6-anhydro ring, generating MurNAc-6-P. Is required for the utilization of anhMurNAc either imported from the medium or derived from its own cell wall murein, and thus plays a role in cell wall recycling. The polypeptide is Anhydro-N-acetylmuramic acid kinase (Chromobacterium violaceum (strain ATCC 12472 / DSM 30191 / JCM 1249 / CCUG 213 / NBRC 12614 / NCIMB 9131 / NCTC 9757 / MK)).